The chain runs to 582 residues: Hydrazine dehydrogenase (582 aa).

The signal sequence occupies residues 1–32 (MRKFLKVTLASALIGCGVIGTVSSLMVKEAKA). Heme c contacts are provided by Cys-121, Cys-124, His-125, His-141, Cys-151, Cys-154, His-155, His-159, Cys-170, Cys-175, His-176, His-191, Cys-216, Cys-219, His-220, Cys-227, Cys-230, His-231, His-234, Cys-247, Cys-250, His-251, His-267, Cys-297, Cys-300, His-301, His-306, Cys-342, Cys-345, His-346, His-454, and Tyr-462. Residues 561–582 (GSHSAHHHESGHDPAARSMKEH) form a disordered region. A compositionally biased stretch (basic and acidic residues) spans 567–582 (HHESGHDPAARSMKEH).

Homotrimer; subunits are linked by two covalent bonds between Tyr-462 of one subunit and heme P460 of an adjacent subunit. May form 24-mer of an octamer of trimers. Heme c is required as a cofactor.

It localises to the anammoxosome. The catalysed reaction is hydrazine + 4 Fe(III)-[cytochrome c] = N2 + 4 Fe(II)-[cytochrome c] + 4 H(+). Its pathway is nitrogen metabolism. With respect to regulation, is strongly and competitively inhibited by NO and hydroxylamine. In terms of biological role, catalyzes the four-electron oxidation of hydrazine to N2. The electrons derived from hydrazine oxidation may be transferred to the quinone pool and exploited to promote the generation of proton-motive force (pmf) across the anammoxosome membrane. Is involved in anaerobic ammonium oxidation (anammox), a biological process in which nitrite is used as the electron acceptor in the conversion of ammonium to dinitrogen gas (N2) and water; this bacterial process has a major role in the Earth's nitrogen cycle and has been estimated to synthesize up to 50% of the dinitrogen gas emitted into our atmosphere from the oceans. Cannot oxidize hydroxylamine to NO. The polypeptide is Hydrazine dehydrogenase (Kuenenia stuttgartiensis).